The sequence spans 189 residues: Probable nicotinate-nucleotide adenylyltransferase (189 aa).

This sequence belongs to the NadD family.

The enzyme catalyses nicotinate beta-D-ribonucleotide + ATP + H(+) = deamido-NAD(+) + diphosphate. It functions in the pathway cofactor biosynthesis; NAD(+) biosynthesis; deamido-NAD(+) from nicotinate D-ribonucleotide: step 1/1. In terms of biological role, catalyzes the reversible adenylation of nicotinate mononucleotide (NaMN) to nicotinic acid adenine dinucleotide (NaAD). The protein is Probable nicotinate-nucleotide adenylyltransferase of Bacillus licheniformis (strain ATCC 14580 / DSM 13 / JCM 2505 / CCUG 7422 / NBRC 12200 / NCIMB 9375 / NCTC 10341 / NRRL NRS-1264 / Gibson 46).